The sequence spans 1465 residues: Vacuolar heme ABC transmembrane exporter abc3 (1465 aa).

The Extracellular segment spans residues 1–8 (MITANKGL). A helical membrane pass occupies residues 9-29 (SLVLLIPNLFALVSGGLQYVF). Residues 30–42 (DVRRRIFRPHFSQ) are Cytoplasmic-facing. A helical transmembrane segment spans residues 43–63 (FWTIWMKFFSIALVIITQIYV). Over 64 to 69 (GYKTKN) the chain is Extracellular. A helical membrane pass occupies residues 70–90 (IGWNFFSVVTYCFVLFLQFAE). Residues 91–97 (QSTLRVP) are Cytoplasmic-facing. The helical transmembrane segment at 98-118 (MASLLIFWLLKVVTSLLILLF) threads the bilayer. Residues 119–129 (SPYIAITSMAR) lie on the Extracellular side of the membrane. Residues 130–150 (LLTLITLFCSLVCFISEVYVP) form a helical membrane-spanning segment. A heme-binding site is contributed by 151–152 (PC). Topologically, residues 151-235 (PCNRVWYSDD…IYHSKNKRRS (85 aa)) are cytoplasmic. A helical transmembrane segment spans residues 236–256 (LFLWKLLFFNHWKLVALITIT). The ABC transmembrane type-1 1 domain maps to 250 to 539 (VALITITKLI…LPTVISSLLE (290 aa)). Over 257–291 (KLIQDVLAFVQPTLIQKTILFISSYTSPNPESPSR) the chain is Extracellular. A helical transmembrane segment spans residues 292–312 (GFIIAILVLVANFLQTLLLQQ). Residues 313–362 (YNQLIMLLGMRWKTELLASIYRKSLLLSSSARQNRSIGDIINYMAVDTQK) are Cytoplasmic-facing. The chain crosses the membrane as a helical span at residues 363–383 (ISDLPIYLFIIVSGPFQIALA). Topologically, residues 384-394 (LSNLYHLMGYS) are extracellular. The chain crosses the membrane as a helical span at residues 395–415 (AFTGVAASVILFPCNIIVANV). The Cytoplasmic portion of the chain corresponds to 416–480 (YKKFQSILMK…KIGFITAIGD (65 aa)). Residues 481-501 (FAWIFTTIIVTTVAFGAFIIF) traverse the membrane as a helical segment. Residues 502–511 (HGKTQALTAD) are Extracellular-facing. The helical transmembrane segment at 512–532 (IVFPAVSLFNLLQFPLAMLPT) threads the bilayer. Topologically, residues 533 to 899 (VISSLLEASV…VYWMYFKSCS (367 aa)) are cytoplasmic. An ABC transporter 1 domain is found at 575-804 (LEIKSGTFSW…TNSELKQQLS (230 aa)). ATP is bound at residue 614–621 (GKVGAGKS). 2 disordered regions span residues 805–824 (EFND…SYPS) and 840–869 (TYSS…TEDD). A helical membrane pass occupies residues 900–920 (IGLILLYFFFIISGIMMNVAT). One can recognise an ABC transmembrane type-1 2 domain in the interval 903–1189 (ILLYFFFIIS…IVQQSVDAEN (287 aa)). The Extracellular segment spans residues 921 to 939 (NVWLKHWSEENGKSSSELN). The helical transmembrane segment at 940–960 (PSPYFYLGIYLFFGFLSCAFI) threads the bilayer. At 961 to 1033 (SSSSLTMTVL…FFFRNSIQVL (73 aa)) the chain is on the cytoplasmic side. A helical transmembrane segment spans residues 1034 to 1054 (FILGVICYSAPLSLLLIVPLF). Residues 1055–1465 (FLYLYNRAYY…YSLAKESGLI (411 aa)) lie on the Extracellular side of the membrane. The ABC transporter 2 domain maps to 1226–1460 (VSFNHYSAKY…KDSMFYSLAK (235 aa)). 1260 to 1267 (GRTGAGKS) contacts ATP.

This sequence belongs to the ABC transporter superfamily.

The protein localises to the vacuole membrane. Iron-regulated vacuolar transporter that mobilizes stored heme from the vacuole to the cytosol in response to iron deficiency. The polypeptide is Vacuolar heme ABC transmembrane exporter abc3 (Schizosaccharomyces pombe (strain 972 / ATCC 24843) (Fission yeast)).